Consider the following 346-residue polypeptide: MSGNNSSLSYKDAGVDIDAGNALVDRIKGAVKRTRRPEVMGGIGGFGALCELPTKYKQPVLVSGTDGVGTKLRLALDMNKHDTIGVDLVAMCVNDLIVQGAEPLFFLDYYATGKLDVDTAADVVSGIADGCVQAGCALIGGETAEMPGMYEGEDYDVAGFCVGVVEKEDVIDGTKVAAGDALIAVGSSGPHSNGYSLIRKILEVSGADKNEELAGRTIGEHLLEPTKIYIKSALKMIEKHDIHAISHITGGGFWENIPRVLLEGTKAVIDGNSWEWPIIFKWLQEKGNVETHEMYRTFNCGVGLVVALPKDQADAAVALLKEEGENAWVIGEIAQAEANEEQVEIQ.

The protein belongs to the AIR synthase family.

It is found in the cytoplasm. It carries out the reaction 2-formamido-N(1)-(5-O-phospho-beta-D-ribosyl)acetamidine + ATP = 5-amino-1-(5-phospho-beta-D-ribosyl)imidazole + ADP + phosphate + H(+). It functions in the pathway purine metabolism; IMP biosynthesis via de novo pathway; 5-amino-1-(5-phospho-D-ribosyl)imidazole from N(2)-formyl-N(1)-(5-phospho-D-ribosyl)glycinamide: step 2/2. This chain is Phosphoribosylformylglycinamidine cyclo-ligase, found in Vibrio campbellii (strain ATCC BAA-1116).